We begin with the raw amino-acid sequence, 417 residues long: Serine--tRNA ligase (417 aa).

Position 232–234 (232–234 (TAE)) interacts with L-serine. ATP-binding positions include 263 to 265 (RRE) and V279. E286 is an L-serine binding site. 350–353 (EISS) provides a ligand contact to ATP. Position 385 (S385) interacts with L-serine.

This sequence belongs to the class-II aminoacyl-tRNA synthetase family. Type-1 seryl-tRNA synthetase subfamily. In terms of assembly, homodimer. The tRNA molecule binds across the dimer.

Its subcellular location is the cytoplasm. The catalysed reaction is tRNA(Ser) + L-serine + ATP = L-seryl-tRNA(Ser) + AMP + diphosphate + H(+). The enzyme catalyses tRNA(Sec) + L-serine + ATP = L-seryl-tRNA(Sec) + AMP + diphosphate + H(+). It participates in aminoacyl-tRNA biosynthesis; selenocysteinyl-tRNA(Sec) biosynthesis; L-seryl-tRNA(Sec) from L-serine and tRNA(Sec): step 1/1. Catalyzes the attachment of serine to tRNA(Ser). Is also able to aminoacylate tRNA(Sec) with serine, to form the misacylated tRNA L-seryl-tRNA(Sec), which will be further converted into selenocysteinyl-tRNA(Sec). The sequence is that of Serine--tRNA ligase from Leptospira interrogans serogroup Icterohaemorrhagiae serovar copenhageni (strain Fiocruz L1-130).